The chain runs to 283 residues: MPVSRYAVFGHPVAHSLSPAIHADFGKQTGIALDYTAIDAAPEEFTAALERFAADGGKGANVTLPLKEAAFALSASLSDRARVAGAVNTLVRNDGQWQGDNTDGAGLVRDLTERHGLDLRGRRVLLLGAGGAARGVAPALLEAGITEMVVVNRSPERADALCDALGEPGRVVSRYLEDLRELGDFELIVNATAAGRDRDAGAFALPLGLVNSLTAAVDLNYGATAIAFLAWARSAQCRYAIDGLGMLVEQAAESFALWHGVRPQTDPVYDALRARDAVLVSAD.

Shikimate is bound by residues 16-18 (SLS) and Thr-63. Lys-67 functions as the Proton acceptor in the catalytic mechanism. Residue Asp-79 participates in NADP(+) binding. Residues Asn-88 and Asp-103 each contribute to the shikimate site. NADP(+) is bound by residues 128-132 (GAGGA), Ala-223, and Gly-243.

The protein belongs to the shikimate dehydrogenase family. In terms of assembly, homodimer.

It carries out the reaction shikimate + NADP(+) = 3-dehydroshikimate + NADPH + H(+). It functions in the pathway metabolic intermediate biosynthesis; chorismate biosynthesis; chorismate from D-erythrose 4-phosphate and phosphoenolpyruvate: step 4/7. Functionally, involved in the biosynthesis of the chorismate, which leads to the biosynthesis of aromatic amino acids. Catalyzes the reversible NADPH linked reduction of 3-dehydroshikimate (DHSA) to yield shikimate (SA). In Xanthomonas campestris pv. campestris (strain 8004), this protein is Shikimate dehydrogenase (NADP(+)).